Consider the following 171-residue polypeptide: Putative lipoprotein LppO (171 aa).

The signal sequence occupies residues 1–28 (MTDPRHTVRIAVGATALGVSALGATLPA). A lipid anchor (N-palmitoyl cysteine) is attached at Cys29. The S-diacylglycerol cysteine moiety is linked to residue Cys29.

The protein resides in the cell membrane. The protein is Putative lipoprotein LppO (lppO) of Mycobacterium tuberculosis (strain CDC 1551 / Oshkosh).